The chain runs to 525 residues: Mannuronan C5-epimerase AlgG (525 aa).

A signal peptide spans 1 to 29 (MNVQRKLASTQLKPVLLGVLLATSAWSQA). PbH1 repeat units follow at residues 287–309 (ADDV…DPHD), 311–334 (SERL…IVSR), 336–358 (VNNS…VLDR), 360–382 (SEHN…TLYE), and 383–405 (SSNN…RMRN). His308 functions as the Proton acceptor in the catalytic mechanism.

This sequence belongs to the D-mannuronate C5-epimerase family.

Its subcellular location is the periplasm. It carries out the reaction [(1-&gt;4)-beta-D-mannuronosyl](n) = [alginate](n). The protein operates within glycan biosynthesis; alginate biosynthesis. Its activity is regulated as follows. Inhibited by zinc. Catalyzes the epimerization of beta-D-mannuronate to alpha-L-guluronate during the synthesis of the linear polysaccharide alginate. In addition, is part of a periplasmic protein complex that protects alginate from degradation by AlgL by channeling the newly formed alginate polymer through a scaffold that transfers the alginate polymer through the periplasmic space to the outer membrane secretin AlgE. The chain is Mannuronan C5-epimerase AlgG from Azotobacter vinelandii.